The chain runs to 725 residues: ABC transporter G family member 7 (725 aa).

Residues 12–34 traverse the membrane as a helical segment; sequence VVSGIGGNGVGGALAAVAAALLV. The ABC transporter domain maps to 70–316; that stretch reads IRWRNITCSL…YFGNFGFLCP (247 aa). Residue 108–115 participates in ATP binding; the sequence is GPSGSGKT. An ABC transmembrane type-2 domain is found at 392–603; the sequence is RQFFLLLKRA…AFQGLCINEF (212 aa). 4 consecutive transmembrane segments (helical) span residues 446–466, 493–513, 528–548, and 553–573; these read LLQV…VGVF, IAEI…LYPM, GIVT…GAMV, and AAMA…GYYV. Positions 676–725 are disordered; sequence NSGVQLDKAEVDQTEKPEDDDINQPLDDQNQTSDSDDELDEIRPFVLEGL. Residues 682-691 show a composition bias toward basic and acidic residues; sequence DKAEVDQTEK.

This sequence belongs to the ABC transporter superfamily. ABCG family. Eye pigment precursor importer (TC 3.A.1.204) subfamily.

It localises to the membrane. This Arabidopsis thaliana (Mouse-ear cress) protein is ABC transporter G family member 7 (ABCG7).